A 204-amino-acid polypeptide reads, in one-letter code: Ribosome maturation factor RimP (204 aa).

It belongs to the RimP family.

The protein localises to the cytoplasm. In terms of biological role, required for maturation of 30S ribosomal subunits. The sequence is that of Ribosome maturation factor RimP from Albidiferax ferrireducens (strain ATCC BAA-621 / DSM 15236 / T118) (Rhodoferax ferrireducens).